Here is a 426-residue protein sequence, read N- to C-terminus: Transcription factor bHLH60 (426 aa).

Polar residues-rich tracts occupy residues 117–137 (QNGNISGETPTSSVPSNSSAN) and 148–172 (TDSSQRLISDSAIENQIPCPNQNNR). A disordered region spans residues 117–201 (QNGNISGETP…SSEENEKLPY (85 aa)). A compositionally biased stretch (basic and acidic residues) spans 191–200 (KSSEENEKLP). The bHLH domain occupies 210–307 (QATDSHSLAE…DEIINHVQSL (98 aa)). The tract at residues 367 to 398 (HRQLQQPPTQQWPFDGLNQPVWGREEDQAHGN) is disordered.

As to quaternary structure, homodimer. In terms of tissue distribution, expressed constitutively in roots, leaves, stems, and flowers.

Its subcellular location is the nucleus. The sequence is that of Transcription factor bHLH60 (BHLH60) from Arabidopsis thaliana (Mouse-ear cress).